Here is a 570-residue protein sequence, read N- to C-terminus: Membrane protein insertase YidC (570 aa).

A compositionally biased stretch (polar residues) spans Gln-31 to Glu-60. Positions Gln-31 to Ser-79 are disordered. The next 5 membrane-spanning stretches (helical) occupy residues Pro-230 to Glu-250, Trp-378 to Ala-398, Leu-444 to Leu-464, Pro-487 to Pro-507, and Pro-522 to Val-542.

The protein belongs to the OXA1/ALB3/YidC family. Type 1 subfamily. Interacts with the Sec translocase complex via SecD. Specifically interacts with transmembrane segments of nascent integral membrane proteins during membrane integration.

It is found in the cell inner membrane. Functionally, required for the insertion and/or proper folding and/or complex formation of integral membrane proteins into the membrane. Involved in integration of membrane proteins that insert both dependently and independently of the Sec translocase complex, as well as at least some lipoproteins. Aids folding of multispanning membrane proteins. In Hahella chejuensis (strain KCTC 2396), this protein is Membrane protein insertase YidC.